We begin with the raw amino-acid sequence, 216 residues long: Calcium-binding protein 2 (216 aa).

The interval 1-41 (MGNCAKTPWHRGSKERWQWPGSPLGGSRPSPGPRTEEQEGT) is disordered. Residue Gly2 is the site of N-myristoyl glycine attachment. The segment covering 20-29 (PGSPLGGSRP) has biased composition (low complexity). 4 consecutive EF-hand domains span residues 74-109 (EEIEELQIAFQEFDRDRDGYIGYRELGACMRTLGYM), 125-142 (GKVDFEDFVELMGPKLLA), 148-183 (IGVRELRDAFREFDTNGDGCISVGELRAALKALLGE), and 185-216 (LSQREVDEILQDIDLNGDGLVDFEEFVRMMSR). Asp87, Asp89, Asp91, Tyr93, and Glu98 together coordinate Ca(2+). Residues Asp161, Asn163, Asp165, Cys167, Glu172, Asp198, Asn200, Asp202, and Glu209 each coordinate Ca(2+).

Expressed in the inner hair cells (IHCs), outer hair cells,(OHCs) and vestibular hair cells within the ear and in the retina (at protein level). Expressed in the retinal cone type 6 ON-bipolar cells and type 1 OFF-bipolar cells (at protein level). Expressed in the organ of Corti and spiral ganglion neurons in the cochlea (at protein level).

It is found in the cytoplasm. Its subcellular location is the perinuclear region. The protein localises to the cell membrane. It localises to the golgi apparatus. Required for sound encoding at inner hair cells (IHCs) synapses, likely via inhibition of the inactivation of voltage-gated calcium channel of type 1.3 (Cav1.3) in the IHCs. Required for the normal transfer of light signals through the retina. In Mus musculus (Mouse), this protein is Calcium-binding protein 2 (Cabp2).